We begin with the raw amino-acid sequence, 232 residues long: MADEMDFYSSDYHNDDAFETPSKPPTSTSGRPKGSGAQGGGGMRFDTEEAREAALRKELEGVRKINEVIEGMIGTLERAKGNMGTVSQTVTNATTLLNTWTRMLSQTEHNQRLILNPEWKGATQDLLELEAEERRRQEEVERRAAEAERRREEARRKAEEEERRRAAAAAAAAAPAGRSVGRGTTRGRVRGSGLTRGASSSASGSETTRTTSGIARGGFGYTRGTARYRGAK.

2 disordered regions span residues 1–44 and 133–232; these read MADE…GGMR and ERRR…RGAK. Positions 128–171 form a coiled coil; sequence ELEAEERRRQEEVERRAAEAERRREEARRKAEEEERRRAAAAAA. Over residues 133–165 the composition is skewed to basic and acidic residues; the sequence is ERRRQEEVERRAAEAERRREEARRKAEEEERRR. 2 stretches are compositionally biased toward low complexity: residues 167-183 and 191-213; these read AAAA…VGRG and GSGL…TTSG.

Belongs to the DASH complex DUO1 family. As to quaternary structure, component of the DASH complex consisting of ASK1, DAD1, DAD2, DAD3, DAD4, DAM1, DUO1, HSK3, SPC19 and SPC34, with a stoichiometry of one copy of each subunit per complex. Multiple DASH complexes oligomerize to form a ring that encircles spindle microtubules and organizes the rod-like NDC80 complexes of the outer kinetochore. DASH complex oligomerization strengthens microtubule attachments. On cytoplasmic microtubules, DASH complexes appear to form patches instead of rings.

Its subcellular location is the nucleus. The protein localises to the cytoplasm. The protein resides in the cytoskeleton. It localises to the spindle pole. It is found in the chromosome. Its subcellular location is the centromere. The protein localises to the kinetochore. Component of the DASH complex that connects microtubules with kinetochores and couples microtubule depolymerisation to chromosome movement; it is involved in retrieving kinetochores to the spindle poles before their re-orientation on the spindle in early mitosis and allows microtubule depolymerization to pull chromosomes apart and resist detachment during anaphase. Kinetochores, consisting of a centromere-associated inner segment and a microtubule-contacting outer segment, play a crucial role in chromosome segregation by mediating the physical connection between centromeric DNA and microtubules. Kinetochores also serve as an input point for the spindle assembly checkpoint, which delays anaphase until all chromosomes have bioriented on the mitotic spindle. The protein is DASH complex subunit DUO1 of Chaetomium thermophilum (strain DSM 1495 / CBS 144.50 / IMI 039719) (Thermochaetoides thermophila).